Consider the following 72-residue polypeptide: Translational regulator CsrA (72 aa).

This sequence belongs to the CsrA/RsmA family. Homodimer; the beta-strands of each monomer intercalate to form a hydrophobic core, while the alpha-helices form wings that extend away from the core.

It is found in the cytoplasm. Its function is as follows. A translational regulator that binds mRNA to regulate translation initiation and/or mRNA stability. Usually binds in the 5'-UTR at or near the Shine-Dalgarno sequence preventing ribosome-binding, thus repressing translation. Its main target seems to be the major flagellin gene, while its function is anatagonized by FliW. The polypeptide is Translational regulator CsrA (Clostridium botulinum (strain 657 / Type Ba4)).